We begin with the raw amino-acid sequence, 209 residues long: Large ribosomal subunit protein uL3 (209 aa).

Residues 112-122 (GTTRGHGTQGN) show a composition bias toward polar residues. The disordered stretch occupies residues 112–146 (GTTRGHGTQGNIKRWGQSRGPETHGSRYHRIPGSM).

This sequence belongs to the universal ribosomal protein uL3 family. In terms of assembly, part of the 50S ribosomal subunit. Forms a cluster with proteins L14 and L19.

Its function is as follows. One of the primary rRNA binding proteins, it binds directly near the 3'-end of the 23S rRNA, where it nucleates assembly of the 50S subunit. This chain is Large ribosomal subunit protein uL3, found in Lactobacillus gasseri (strain ATCC 33323 / DSM 20243 / BCRC 14619 / CIP 102991 / JCM 1131 / KCTC 3163 / NCIMB 11718 / NCTC 13722 / AM63).